A 301-amino-acid chain; its full sequence is Nucleotide-binding protein Mb1456 (301 aa).

G24 to G31 contacts ATP. D75 to S78 lines the GTP pocket.

It belongs to the RapZ-like family.

In terms of biological role, displays ATPase and GTPase activities. This is Nucleotide-binding protein Mb1456 from Mycobacterium bovis (strain ATCC BAA-935 / AF2122/97).